A 586-amino-acid chain; its full sequence is Proline--tRNA ligase (586 aa).

The protein belongs to the class-II aminoacyl-tRNA synthetase family. ProS type 1 subfamily. Homodimer.

The protein resides in the cytoplasm. The catalysed reaction is tRNA(Pro) + L-proline + ATP = L-prolyl-tRNA(Pro) + AMP + diphosphate. In terms of biological role, catalyzes the attachment of proline to tRNA(Pro) in a two-step reaction: proline is first activated by ATP to form Pro-AMP and then transferred to the acceptor end of tRNA(Pro). As ProRS can inadvertently accommodate and process non-cognate amino acids such as alanine and cysteine, to avoid such errors it has two additional distinct editing activities against alanine. One activity is designated as 'pretransfer' editing and involves the tRNA(Pro)-independent hydrolysis of activated Ala-AMP. The other activity is designated 'posttransfer' editing and involves deacylation of mischarged Ala-tRNA(Pro). The misacylated Cys-tRNA(Pro) is not edited by ProRS. The sequence is that of Proline--tRNA ligase from Kineococcus radiotolerans (strain ATCC BAA-149 / DSM 14245 / SRS30216).